Reading from the N-terminus, the 524-residue chain is Caffeate CoA-transferase (524 aa).

Glu-323 functions as the 5-glutamyl coenzyme A thioester intermediate in the catalytic mechanism.

Belongs to the 3-oxoacid CoA-transferase family. As to quaternary structure, homodimer.

The enzyme catalyses hydrocaffeoyl-CoA + (E)-caffeate = 3-(3,4-dihydroxyphenyl)propanoate + (E)-caffeoyl-CoA. In terms of biological role, involved in caffeate respiration, which consists in the reduction of the C-C double bond of caffeate. CarA catalyzes an energy-saving CoA loop for caffeate activation in the steady state of caffeate respiration. It catalyzes the formation of caffeyl-CoA from caffeate with hydrocaffeyl-CoA as the CoA donor via a ping-pong mechanism. In addition to caffeate, the enzyme can utilize 4-coumarate or ferulate as CoA acceptor. Neither acetyl-CoA nor butyryl-CoA served as the CoA donor. The polypeptide is Caffeate CoA-transferase (Acetobacterium woodii).